Here is a 421-residue protein sequence, read N- to C-terminus: Testin (421 aa).

The PET domain occupies 92–199 (MILTNPVAAK…GDVKLPCEMD (108 aa)). The interval 133–164 (EKQPVAGSEGAQYRKKQLAKQLPAHDQDPSKC) is disordered. Positions 155 to 164 (PAHDQDPSKC) are enriched in basic and acidic residues. LIM zinc-binding domains are found at residues 234 to 297 (YSCY…CDSE), 299 to 359 (PRCA…NHAV), and 362 to 421 (QGCH…KRMS).

Belongs to the prickle / espinas / testin family. In terms of assembly, interacts via LIM domain 1 with ZYX. Interacts (via LIM domain 3) with ENAH and VASP. Interacts with ALKBH4, talin, actin, alpha-actinin, GRIP1 and PXN. Interacts (via LIM domain 2) with ACTL7A (via N-terminus). Heterodimer with ACTL7A; the heterodimer interacts with ENAH to form a heterotrimer.

The protein localises to the cytoplasm. Its subcellular location is the cell junction. The protein resides in the focal adhesion. Functionally, scaffold protein that may play a role in cell adhesion, cell spreading and in the reorganization of the actin cytoskeleton. Plays a role in the regulation of cell proliferation. May act as a tumor suppressor. The chain is Testin (TES) from Pan troglodytes (Chimpanzee).